Consider the following 458-residue polypeptide: tRNA-2-methylthio-N(6)-dimethylallyladenosine synthase (458 aa).

In terms of domain architecture, MTTase N-terminal spans 15–134 (KKVFIKTYGC…LPDLLEQTKQ (120 aa)). Residues C24, C60, C97, C175, C179, and C182 each coordinate [4Fe-4S] cluster. In terms of domain architecture, Radical SAM core spans 161 to 393 (RKRGVSAFLT…QVLLLEQQNA (233 aa)). The TRAM domain occupies 396 to 457 (RSKIGQTTDV…SNSFVGEIAN (62 aa)).

It belongs to the methylthiotransferase family. MiaB subfamily. As to quaternary structure, monomer. The cofactor is [4Fe-4S] cluster.

It localises to the cytoplasm. It carries out the reaction N(6)-dimethylallyladenosine(37) in tRNA + (sulfur carrier)-SH + AH2 + 2 S-adenosyl-L-methionine = 2-methylsulfanyl-N(6)-dimethylallyladenosine(37) in tRNA + (sulfur carrier)-H + 5'-deoxyadenosine + L-methionine + A + S-adenosyl-L-homocysteine + 2 H(+). Catalyzes the methylthiolation of N6-(dimethylallyl)adenosine (i(6)A), leading to the formation of 2-methylthio-N6-(dimethylallyl)adenosine (ms(2)i(6)A) at position 37 in tRNAs that read codons beginning with uridine. The protein is tRNA-2-methylthio-N(6)-dimethylallyladenosine synthase of Bartonella quintana (strain Toulouse) (Rochalimaea quintana).